A 379-amino-acid polypeptide reads, in one-letter code: MSATLALTEQLIARASVTPDDQHCQQIMTERLAALGFDCETVASHGVTNLWAVKRGTDGRDGKLLAFAGHTDVVPTGPLEQWTSPPFVPAHRDGKLYGRGAADMKTSLAAFVVAAEEFVAAHPDHRGAIAFLITSDEEGPATDGTVKVVELLESRGERLDYCIVGEPTSTAELGDVVKNGRRGSMSGELIVKGVQGHIAYPHLAKNPIHLLAPALAELAAEQWDEGNEYFPPTTWQVSNLRAGTGATNVIPGHADLLFNFRFSTASTVEGLQARVHAILDKHQLDYTLKWTVSGLPFLTPRGELSNALEHAIRAETGLTTELSTTGGTSDGRFIARICPQVIEFGPPNGSIHKIDEHIEVRFVEPLKNVYRRVLEQLIA.

Histidine 70 is a binding site for Zn(2+). Residue aspartate 72 is part of the active site. A Zn(2+)-binding site is contributed by aspartate 103. Catalysis depends on glutamate 137, which acts as the Proton acceptor. Zn(2+) contacts are provided by glutamate 138, glutamate 166, and histidine 352.

It belongs to the peptidase M20A family. DapE subfamily. Homodimer. Zn(2+) is required as a cofactor. The cofactor is Co(2+).

It catalyses the reaction N-succinyl-(2S,6S)-2,6-diaminopimelate + H2O = (2S,6S)-2,6-diaminopimelate + succinate. It functions in the pathway amino-acid biosynthesis; L-lysine biosynthesis via DAP pathway; LL-2,6-diaminopimelate from (S)-tetrahydrodipicolinate (succinylase route): step 3/3. Catalyzes the hydrolysis of N-succinyl-L,L-diaminopimelic acid (SDAP), forming succinate and LL-2,6-diaminopimelate (DAP), an intermediate involved in the bacterial biosynthesis of lysine and meso-diaminopimelic acid, an essential component of bacterial cell walls. The protein is Succinyl-diaminopimelate desuccinylase of Burkholderia multivorans (strain ATCC 17616 / 249).